A 732-amino-acid chain; its full sequence is TIR domain-containing adapter molecule 1 (732 aa).

Positions 1-153 (MDNPGPSLRG…CSSDIKGDPS (153 aa)) are TRIF-NTD. Residues 84 to 91 (EGPEEPPD) carry the TRAF6-binding motif. The interval 144–191 (CSSDIKGDPSGFQPLHSHQGSLQPPSASPAVTRSQPRPIDTPDWSWGH) is disordered. Positions 159–178 (HSHQGSLQPPSASPAVTRSQ) are enriched in polar residues. The short motif at 206-209 (LEIS) is the pLxIS motif element. Residue serine 209 is modified to Phosphoserine. A Glycyl lysine isopeptide (Lys-Gly) (interchain with G-Cter in ubiquitin) cross-link involves residue lysine 228. 2 consecutive short sequence motifs (TRAF6-binding) follow at residues 247–254 (QEPEEISW) and 296–306 (HCPIECTELST). A compositionally biased stretch (polar residues) spans 305-331 (STNSRSPLTSTTESVGKQWPITSQRSP). Residues 305–389 (STNSRSPLTS…TSTSPVLDHS (85 aa)) form a disordered region. A compositionally biased stretch (low complexity) spans 345–359 (SSSPPAQPPSLQASP). A TIR domain is found at 395 to 534 (KFYNFVVIHA…KVANTFKTQK (140 aa)). Residues 514–713 (WLDEHSPIFA…SSDDKTECSE (200 aa)) are sufficient to induce apoptosis. Disordered regions lie at residues 603–679 (TPSW…GPQP) and 696–732 (MWGHTGAQSSDDKTECSENPCMGPLTDQGEPLLETPE). Composition is skewed to pro residues over residues 604 to 615 (PSWPGCPQPIPS) and 625 to 657 (PYSPQPPSFPQPPCFPQPPSFPQPPSFPLPPVS). Low complexity predominate over residues 658–671 (SPQSQSFPSASSPA).

Homodimer. Found in a multi-helicase-TICAM1 complex at least composed of DHX36, DDX1, DDX21 and TICAM1; this complex exists in resting cells with or without poly(I:C) RNA ligand stimulation. Interacts (via TIR domain) with DDX21 (via C-terminus). Interacts (via TIR domain) with DHX36 (via C-terminus). Interacts with AZI2 and IRF7. Interacts (when phosphorylated) with IRF3; following activation and phosphorylation on the pLxIS motif by TBK1, recruits IRF3. Interacts with TICAM2 in TLR4 recruitment. Interaction with PIAS4 inhibits the TICAM1-induced NF-kappa-B, IRF and IFNB1 activation. Interacts with IKBKB and IKBKE. Interaction with SARM1 blocks TICAM1-dependent transcription factor activation. Interacts with TRAF3. Interacts with TRAFD1. Interacts with UBQLN1 (via UBA domain). Interacts with TBK1, TRAF6 and RIPK1 and these interactions are enhanced in the presence of WDFY1. Interacts (via the TIR domain) with TLR3 in response to poly(I:C) and this interaction is enhanced in the presence of WDFY1. Interacts with TLR4 in response to poly(I:C) in a WDFY1-dependent manner. Interacts with WDFY1 in response to poly(I:C). Interacts with TRIM56. Interacts (via the TIR domain) with TLR5. Interacts with TRIM8. Interacts with TAX1BP1 and TRIM32; these interactions target TICAM1 to TAX1BP1-mediated selective autophagic degradation. Interacts with DDX50. Post-translationally, phosphorylated by TBK1. Following activation, phosphorylated by TBK1 at Ser-209 in the pLxIS motif. The phosphorylated pLxIS motif constitutes an IRF3-binding motif, leading to recruitment of the transcription factor IRF3 to induce type-I interferons and other cytokines. In terms of processing, polyubiquitinated at Lys-228 by TRIM38 with 'Lys-48'-linked chains, leading to proteasomal degradation. Polyubiquitinated with 'Lys-6'- and 'Lys-33'-linked chains in a TRIM8-dependent manner; ubiquitination disrupts the interaction with TBK1 and subsequent interferon production.

It is found in the cytoplasm. It localises to the cytosol. Its subcellular location is the cytoplasmic vesicle. The protein localises to the autophagosome. The protein resides in the mitochondrion. Its function is as follows. Involved in innate immunity against invading pathogens. Adapter used by TLR3, TLR4 (through TICAM2) and TLR5 to mediate NF-kappa-B and interferon-regulatory factor (IRF) activation, and to induce apoptosis. Ligand binding to these receptors results in TRIF recruitment through its TIR domain. Distinct protein-interaction motifs allow recruitment of the effector proteins TBK1, TRAF6 and RIPK1, which in turn, lead to the activation of transcription factors IRF3 and IRF7, NF-kappa-B and FADD respectively. Phosphorylation by TBK1 on the pLxIS motif leads to recruitment and subsequent activation of the transcription factor IRF3 to induce expression of type I interferon and exert a potent immunity against invading pathogens. Component of a multi-helicase-TICAM1 complex that acts as a cytoplasmic sensor of viral double-stranded RNA (dsRNA) and plays a role in the activation of a cascade of antiviral responses including the induction of pro-inflammatory cytokines. This chain is TIR domain-containing adapter molecule 1 (Ticam1), found in Mus musculus (Mouse).